Reading from the N-terminus, the 227-residue chain is Cytidylate kinase (227 aa).

12–20 (GPSGAGKGT) serves as a coordination point for ATP.

It belongs to the cytidylate kinase family. Type 1 subfamily.

The protein localises to the cytoplasm. It carries out the reaction CMP + ATP = CDP + ADP. It catalyses the reaction dCMP + ATP = dCDP + ADP. This Salmonella paratyphi B (strain ATCC BAA-1250 / SPB7) protein is Cytidylate kinase.